A 216-amino-acid chain; its full sequence is Large ribosomal subunit protein uL3 (216 aa).

An N5-methylglutamine modification is found at Gln153.

Belongs to the universal ribosomal protein uL3 family. Part of the 50S ribosomal subunit. Forms a cluster with proteins L14 and L19. Post-translationally, methylated by PrmB.

Functionally, one of the primary rRNA binding proteins, it binds directly near the 3'-end of the 23S rRNA, where it nucleates assembly of the 50S subunit. This chain is Large ribosomal subunit protein uL3, found in Burkholderia ambifaria (strain MC40-6).